The primary structure comprises 397 residues: Teichoic acid D-alanine hydrolase (397 aa).

The N-terminal stretch at 1-27 is a signal peptide; sequence MKFNKEKLVIHACVLLFIIISIGLVFH.

Its subcellular location is the cell membrane. It catalyses the reaction [(4-D-Ala)-(2-GlcNAc)-Rib-ol-P]n-[Gro-P]m-beta-D-ManNAc-(1-&gt;4)-alpha-D-GlcNAc-P-peptidoglycan + n H2O = [(2-GlcNAc)-Rib-ol-P]n-[Gro-P]m-beta-D-ManNAc-(1-&gt;4)-alpha-D-GlcNAc-P-peptidoglycan + n D-alanine.. In terms of biological role, catalyzes the liberation of D-alanyl moieties present on wall teichoic acid (WTA) and lipoteichoic acid (LTA). Affects the methicillin resistance level and autolysis in the presence of Triton X-100 as well as the cell wall structure. This chain is Teichoic acid D-alanine hydrolase (fmtA), found in Staphylococcus aureus (strain MRSA252).